The primary structure comprises 854 residues: Fibroblast growth factor receptor 1 (854 aa).

Residues 1 to 20 (MSGLFFLLSELLILLGKINS) form the signal peptide. The Extracellular portion of the chain corresponds to 21–383 (VSKKSLCHPE…NFFMNSVPLS (363 aa)). An Ig-like C2-type 1 domain is found at 29-120 (PELFKIDNKL…SSVFFLINVT (92 aa)). C50 and C102 are joined by a disulfide. 11 N-linked (GlcNAc...) asparagine glycosylation sites follow: N95, N99, N110, N118, N140, N175, N202, N248, N283, N317, and N346. 2 Ig-like C2-type domains span residues 147-259 (PEMG…FTFT) and 268-369 (PHLT…LSVI). Cysteines 166 and 242 form a disulfide. Cysteines 288 and 353 form a disulfide. Residues 384–404 (IFLVIGFFVAIILLSLIIYCF) traverse the membrane as a helical segment. Topologically, residues 405-854 (FLQYKNAVDS…SDYLEPKCLV (450 aa)) are cytoplasmic. The Protein kinase domain maps to 551-822 (KITNKKLGEG…EIVEILIDII (272 aa)). ATP is bound by residues 557–565 (LGEGAFGMV) and K585. D689 acts as the Proton acceptor in catalysis. Position 718 is a phosphotyrosine; by autocatalysis (Y718).

The protein belongs to the protein kinase superfamily. Tyr protein kinase family. Fibroblast growth factor receptor subfamily. In terms of tissue distribution, expressed in brain, stem cells and the mesenchymal cells.

The protein resides in the membrane. The enzyme catalyses L-tyrosyl-[protein] + ATP = O-phospho-L-tyrosyl-[protein] + ADP + H(+). In terms of biological role, receptor for basic fibroblast growth factor. This Dugesia japonica (Planarian) protein is Fibroblast growth factor receptor 1 (FGFR1).